The following is a 156-amino-acid chain: DNA gyrase inhibitor (156 aa).

Belongs to the DNA gyrase inhibitor family. Interacts with DNA gyrase.

Its subcellular location is the cytoplasm. Functionally, inhibits the supercoiling activity of DNA gyrase. Acts by inhibiting DNA gyrase at an early step, prior to (or at the step of) binding of DNA by the gyrase. It protects cells against toxins that target DNA gyrase, by inhibiting activity of these toxins and reducing the formation of lethal double-strand breaks in the cell. This chain is DNA gyrase inhibitor, found in Serratia proteamaculans (strain 568).